Here is a 144-residue protein sequence, read N- to C-terminus: 3-dehydroquinate dehydratase (144 aa).

The active-site Proton acceptor is the Y24. Substrate-binding residues include N76, H82, and D89. H102 serves as the catalytic Proton donor. Substrate is bound by residues 103–104 and R113; that span reads LS.

The protein belongs to the type-II 3-dehydroquinase family. Homododecamer.

It catalyses the reaction 3-dehydroquinate = 3-dehydroshikimate + H2O. It participates in metabolic intermediate biosynthesis; chorismate biosynthesis; chorismate from D-erythrose 4-phosphate and phosphoenolpyruvate: step 3/7. In terms of biological role, catalyzes a trans-dehydration via an enolate intermediate. This is 3-dehydroquinate dehydratase from Bordetella petrii (strain ATCC BAA-461 / DSM 12804 / CCUG 43448).